Consider the following 536-residue polypeptide: 2,3-bisphosphoglycerate-independent phosphoglycerate mutase (536 aa).

2 residues coordinate Mn(2+): Asp-19 and Ser-69. Ser-69 serves as the catalytic Phosphoserine intermediate. Residues His-130, 160–161 (RD), Arg-192, Arg-198, 262–265 (RPDR), and Lys-335 contribute to the substrate site. Asp-402, His-406, Asp-443, His-444, and His-461 together coordinate Mn(2+).

This sequence belongs to the BPG-independent phosphoglycerate mutase family. In terms of assembly, monomer. Mn(2+) is required as a cofactor.

The enzyme catalyses (2R)-2-phosphoglycerate = (2R)-3-phosphoglycerate. It functions in the pathway carbohydrate degradation; glycolysis; pyruvate from D-glyceraldehyde 3-phosphate: step 3/5. In terms of biological role, catalyzes the interconversion of 2-phosphoglycerate and 3-phosphoglycerate. This Gloeobacter violaceus (strain ATCC 29082 / PCC 7421) protein is 2,3-bisphosphoglycerate-independent phosphoglycerate mutase.